Reading from the N-terminus, the 242-residue chain is Uridylate kinase (242 aa).

11-14 is a binding site for ATP; that stretch reads KLSG. The interval 19–24 is involved in allosteric activation by GTP; sequence GDKGVG. Glycine 53 is a UMP binding site. Positions 54 and 58 each coordinate ATP. UMP-binding positions include aspartate 73 and 134 to 141; that span reads IGSPYFST. ATP is bound by residues asparagine 162, tyrosine 168, and aspartate 171.

Belongs to the UMP kinase family. In terms of assembly, homohexamer.

The protein resides in the cytoplasm. It carries out the reaction UMP + ATP = UDP + ADP. The protein operates within pyrimidine metabolism; CTP biosynthesis via de novo pathway; UDP from UMP (UMPK route): step 1/1. With respect to regulation, allosterically activated by GTP. Inhibited by UTP. Its function is as follows. Catalyzes the reversible phosphorylation of UMP to UDP. The protein is Uridylate kinase of Streptococcus agalactiae serotype Ia (strain ATCC 27591 / A909 / CDC SS700).